A 175-amino-acid polypeptide reads, in one-letter code: DELTA-stichotoxin-She4b (175 aa).

Positions 1-10 (ALAGTIIAGA) are plays an important role in the hemolytic activity. An N-terminal region region spans residues 9–28 (GASLTFQVLDKVLEELGKVS). The phosphocholine site is built by serine 52, valine 85, serine 103, proline 105, tyrosine 131, tyrosine 135, and tyrosine 136. The interval 103–118 (SVPFDYNWYSNWWDVK) is trp-rich region, which is important for the binding to lipid membrane. Positions 141 to 143 (RGD) match the Cell attachment site, crucial for protein stability motif.

In terms of assembly, octamer or nonamer in membranes. Monomer in the soluble state. Originally described as forming tetramer in the presence of a lipidic interface. Expressed in tentacles and mesenteric filaments.

The protein resides in the secreted. It is found in the nematocyst. The protein localises to the target cell membrane. Pore-forming protein that forms cations-selective hydrophilic pores of around 1 nm and causes cardiac stimulation and cytolysis. Pore formation is a multi-step process that involves specific recognition of membrane sphingomyelin (but neither cholesterol nor phosphatidylcholine) using aromatic rich region and adjacent phosphocholine (POC) binding site, firm binding to the membrane (mainly driven by hydrophobic interactions) accompanied by the transfer of the N-terminal region to the lipid-water interface and finally pore formation after oligomerization of monomers. Cytolytic effects include red blood cells hemolysis, platelet aggregation and lysis, cytotoxic and cytostatic effects on fibroblasts. Lethality in mammals has been ascribed to severe vasospasm of coronary vessels, cardiac arrhythmia, and inotropic effects. This chain is DELTA-stichotoxin-She4b, found in Stichodactyla helianthus (Sun anemone).